We begin with the raw amino-acid sequence, 322 residues long: NAD(P)H-dependent D-xylose reductase (322 aa).

Tyr52 functions as the Proton donor in the catalytic mechanism. His114 is a substrate binding site. NAD(+)-binding positions include 169–170, 218–227, and 274–284; these read SN, SSFGPQSFVE, and KSNLPERLVQN.

The protein belongs to the aldo/keto reductase family. In terms of assembly, homodimer.

It catalyses the reaction xylitol + NAD(+) = D-xylose + NADH + H(+). The enzyme catalyses xylitol + NADP(+) = D-xylose + NADPH + H(+). It functions in the pathway carbohydrate metabolism; D-xylose degradation. In terms of biological role, reduces D-xylose into xylitol. Has a preference for NADPH, but can also utilize NADH as cosubstrate. This chain is NAD(P)H-dependent D-xylose reductase (XYL1), found in Candida tenuis (Yeast).